Consider the following 181-residue polypeptide: Ribonuclease M5 (181 aa).

Residues 3–86 (KEVIVVEGRD…AYISQEEGTK (84 aa)) form the Toprim domain. Mg(2+) is bound by residues Glu9, Asp55, and Asp57.

The protein belongs to the ribonuclease M5 family. The cofactor is Mg(2+).

The protein resides in the cytoplasm. The catalysed reaction is Endonucleolytic cleavage of RNA, removing 21 and 42 nucleotides, respectively, from the 5'- and 3'-termini of a 5S-rRNA precursor.. Required for correct processing of both the 5' and 3' ends of 5S rRNA precursor. Cleaves both sides of a double-stranded region yielding mature 5S rRNA in one step. In Clostridium botulinum (strain Hall / ATCC 3502 / NCTC 13319 / Type A), this protein is Ribonuclease M5.